The primary structure comprises 333 residues: 1,5-anhydro-D-fructose reductase (333 aa).

NADP(+)-binding positions include 9 to 12 (ASTI), 33 to 34 (SS), arginine 38, 71 to 76 (TTNELH), 93 to 94 (EK), asparagine 120, 162 to 163 (WR), and tyrosine 283.

Belongs to the Gfo/Idh/MocA family. Monomer.

The catalysed reaction is 1,5-anhydro-D-mannitol + NADP(+) = 1,5-anhydro-D-fructose + NADPH + H(+). Catalyzes the NADPH-specific reduction of 1,5-anhydro-D-fructose to 1,5-anhydro-D-mannitol. This chain is 1,5-anhydro-D-fructose reductase (afr), found in Rhizobium meliloti (strain 1021) (Ensifer meliloti).